Here is a 434-residue protein sequence, read N- to C-terminus: Vi polysaccharide export inner-membrane protein VexD (434 aa).

Residues M1–P50 are compositionally biased toward basic and acidic residues. Residues M1–D58 form a disordered region. Helical transmembrane passes span L84–S104 and W409–I429.

The protein belongs to the BexC/CtrB/KpsE family.

It localises to the cell inner membrane. Its function is as follows. May form an ATP-driven capsule polysaccharide export apparatus, in association with the VexA, VexB and VexC proteins. The protein is Vi polysaccharide export inner-membrane protein VexD (vexD) of Salmonella typhi.